The chain runs to 264 residues: S-adenosylmethionine decarboxylase proenzyme (264 aa).

S113 serves as the catalytic Schiff-base intermediate with substrate; via pyruvic acid. At S113 the chain carries Pyruvic acid (Ser); by autocatalysis. Residue H118 is the Proton acceptor; for processing activity of the active site. C141 (proton donor; for catalytic activity) is an active-site residue.

It belongs to the prokaryotic AdoMetDC family. Type 2 subfamily. As to quaternary structure, heterooctamer of four alpha and four beta chains arranged as a tetramer of alpha/beta heterodimers. Pyruvate is required as a cofactor. Post-translationally, is synthesized initially as an inactive proenzyme. Formation of the active enzyme involves a self-maturation process in which the active site pyruvoyl group is generated from an internal serine residue via an autocatalytic post-translational modification. Two non-identical subunits are generated from the proenzyme in this reaction, and the pyruvate is formed at the N-terminus of the alpha chain, which is derived from the carboxyl end of the proenzyme. The post-translation cleavage follows an unusual pathway, termed non-hydrolytic serinolysis, in which the side chain hydroxyl group of the serine supplies its oxygen atom to form the C-terminus of the beta chain, while the remainder of the serine residue undergoes an oxidative deamination to produce ammonia and the pyruvoyl group blocking the N-terminus of the alpha chain.

It catalyses the reaction S-adenosyl-L-methionine + H(+) = S-adenosyl 3-(methylsulfanyl)propylamine + CO2. It functions in the pathway amine and polyamine biosynthesis; S-adenosylmethioninamine biosynthesis; S-adenosylmethioninamine from S-adenosyl-L-methionine: step 1/1. Catalyzes the decarboxylation of S-adenosylmethionine to S-adenosylmethioninamine (dcAdoMet), the propylamine donor required for the synthesis of the polyamines spermine and spermidine from the diamine putrescine. This Xylella fastidiosa (strain 9a5c) protein is S-adenosylmethionine decarboxylase proenzyme.